A 257-amino-acid polypeptide reads, in one-letter code: Phosphonates import ATP-binding protein PhnC (257 aa).

One can recognise an ABC transporter domain in the interval 4-248 (IEFKNVSKVY…IFSEIYGRTI (245 aa)). 37-44 (GLSGAGKS) provides a ligand contact to ATP.

This sequence belongs to the ABC transporter superfamily. Phosphonates importer (TC 3.A.1.9.1) family. In terms of assembly, the complex is composed of two ATP-binding proteins (PhnC), two transmembrane proteins (PhnE) and a solute-binding protein (PhnD).

Its subcellular location is the cell membrane. It carries out the reaction phosphonate(out) + ATP + H2O = phosphonate(in) + ADP + phosphate + H(+). Its function is as follows. Part of the ABC transporter complex PhnCDE involved in phosphonates import. Responsible for energy coupling to the transport system. In Staphylococcus aureus (strain bovine RF122 / ET3-1), this protein is Phosphonates import ATP-binding protein PhnC.